A 616-amino-acid polypeptide reads, in one-letter code: Dihydroxy-acid dehydratase (616 aa).

Aspartate 81 serves as a coordination point for Mg(2+). Cysteine 122 contributes to the [2Fe-2S] cluster binding site. Positions 123 and 124 each coordinate Mg(2+). Position 124 is an N6-carboxylysine (lysine 124). Cysteine 195 contributes to the [2Fe-2S] cluster binding site. Glutamate 491 is a binding site for Mg(2+). The active-site Proton acceptor is serine 517.

This sequence belongs to the IlvD/Edd family. In terms of assembly, homodimer. It depends on [2Fe-2S] cluster as a cofactor. Requires Mg(2+) as cofactor.

It catalyses the reaction (2R)-2,3-dihydroxy-3-methylbutanoate = 3-methyl-2-oxobutanoate + H2O. The enzyme catalyses (2R,3R)-2,3-dihydroxy-3-methylpentanoate = (S)-3-methyl-2-oxopentanoate + H2O. It participates in amino-acid biosynthesis; L-isoleucine biosynthesis; L-isoleucine from 2-oxobutanoate: step 3/4. Its pathway is amino-acid biosynthesis; L-valine biosynthesis; L-valine from pyruvate: step 3/4. In terms of biological role, functions in the biosynthesis of branched-chain amino acids. Catalyzes the dehydration of (2R,3R)-2,3-dihydroxy-3-methylpentanoate (2,3-dihydroxy-3-methylvalerate) into 2-oxo-3-methylpentanoate (2-oxo-3-methylvalerate) and of (2R)-2,3-dihydroxy-3-methylbutanoate (2,3-dihydroxyisovalerate) into 2-oxo-3-methylbutanoate (2-oxoisovalerate), the penultimate precursor to L-isoleucine and L-valine, respectively. The protein is Dihydroxy-acid dehydratase of Escherichia coli O81 (strain ED1a).